The primary structure comprises 3969 residues: Histone-lysine N-methyltransferase 2A (3969 aa).

Disordered stretches follow at residues 1 to 108, 132 to 253, and 301 to 352; these read MAHS…LLRV, VFGE…EDSL, and RRRG…RQSP. Residues 6–25 carry the Menin-binding motif (MBM) motif; that stretch reads RWRFPARPGTTGGGGGGGRR. A compositionally biased stretch (gly residues) spans 15–29; that stretch reads TTGGGGGGGRRGLGG. 2 stretches are compositionally biased toward low complexity: residues 59–69 and 77–104; these read AVAAAAAAAGS and GAAAASAASSSSASSSSSSSSSASSGPA. The Integrase domain-binding motif 1 (IBM1) motif lies at 123–134; that stretch reads GTNLRRFRAVFG. S136 and S142 each carry phosphoserine; by CK2. The short motif at 147-152 is the Integrase domain-binding motif 2 (IBM2) element; it reads QFLGFG. S153 bears the Phosphoserine mark. The segment at residues 169–180 is a DNA-binding region (a.T hook 1); the sequence is KTSPRKPRGRPR. S197 is modified (phosphoserine). Basic and acidic residues-rich tracts occupy residues 202 to 220 and 237 to 253; these read SETKSGDKIKKKDSKSIEK and HGKDISELPKGNKEDSL. The segment at residues 217–227 is a DNA-binding region (a.T hook 2); sequence SIEKKRGRPPT. K239 is subject to N6-acetyllysine. The a.T hook 3 DNA-binding region spans 301 to 309; sequence RRRGRPPST. Residues 323 to 347 are compositionally biased toward basic and acidic residues; sequence ELEKPQKVRKDKEGTPPLTKEDKTV. N6-acetyllysine is present on K373. Positions 445–585 are disordered; the sequence is STPNSRFSAP…SSISDHTPWL (141 aa). Residues 452–491 are compositionally biased toward low complexity; that stretch reads SAPSCGSSEKSSAASQHSSQMSSDSSRSSSPSVDTSTDSQ. Residue S518 is modified to Phosphoserine. A compositionally biased stretch (low complexity) spans 546–559; sequence LSTLQSAPQQQTSS. Residues 560–573 are compositionally biased toward pro residues; sequence SPPPPLLTPPPPLQ. K636 bears the N6-acetyllysine mark. Residue S680 is modified to Phosphoserine. Disordered regions lie at residues 713-780, 798-949, 1038-1066, and 1106-1166; these read ESVT…SSSL, FPSH…TSVT, EKSKSLKQTDQPKAQGQESDSSETSVRGP, and SSMG…VPED. A compositionally biased stretch (polar residues) spans 716–732; it reads TLPSNRTSAGTSSSGVS. The segment covering 762–780 has biased composition (low complexity); the sequence is LSSSELSPLTPPSSVSSSL. Over residues 798–808 the composition is skewed to polar residues; that stretch reads FPSHSLTQSGE. A compositionally biased stretch (low complexity) spans 820-841; the sequence is TSAPAEPFSSSSPTPLFPWFTP. A Phosphothreonine modification is found at T840. The span at 846-890 shows a compositional bias: basic and acidic residues; that stretch reads ERGRNKDKAPEELSKDRDADKSVEKDKSRERDREREKENKRESRK. 2 positions are modified to phosphoserine: S926 and S1056. Over residues 1043-1062 the composition is skewed to polar residues; the sequence is LKQTDQPKAQGQESDSSETS. N6-acetyllysine is present on K1130. A CXXC-type zinc finger spans residues 1147–1195; it reads KKGRRSRRCGQCPGCQVPEDCGVCTNCLDKPKFGGRNIKKQCCKMRKCQ. The Zn(2+) site is built by C1155, C1158, C1161, C1167, C1170, C1173, C1189, and C1194. The disordered stretch occupies residues 1200–1375; the sequence is MPSKAYLQKQ…PPVNKQENAG (176 aa). The segment covering 1220 to 1232 has biased composition (basic and acidic residues); that stretch reads SKTSEKKDSKESS. The segment covering 1233 to 1243 has biased composition (low complexity); that stretch reads VVKNVVDSSQK. K1235 carries the post-translational modification N6-acetyllysine. Positions 1248 to 1273 are enriched in basic and acidic residues; it reads AREDPAPKKSSSEPPPRKPVEEKSEE. A compositionally biased stretch (polar residues) spans 1284–1300; it reads KQATTPASRKSSKQVSQ. Residues 1304–1313 show a composition bias toward pro residues; sequence VIPPQPPTTG. 3 PHD-type zinc fingers span residues 1431–1482, 1479–1533, and 1566–1627; these read RVVC…CKFC, CKFC…CVRC, and GNFC…CTER. Residues 1584–1600 are interaction with histone H3K4me3; the sequence is KMMQCGKCDRWVHSKCE. Positions 1635 to 1765 constitute a Bromo domain; sequence ALEKELQISL…SFFIRQMERV (131 aa). Disordered regions lie at residues 1663 to 1713 and 1806 to 1869; these read YRQA…GVKR and QERE…GIED. Residues 1826–1847 are compositionally biased toward pro residues; that stretch reads APKPKGPGEPDSPTPLHPPTPP. S1837 carries the phosphoserine modification. Phosphothreonine is present on T1845. Position 1858 is a phosphoserine (S1858). Residues 1870-1910 form a C2HC pre-PHD-type zinc finger; that stretch reads NRQCALCLTYGDDSANDAGRLLYIGQNEWTHVNCALWSAEV. Residues 1931 to 1978 form a PHD-type 4 zinc finger; sequence LRCEFCQKPGATVGCCLTSCTSNYHFMCSRAKNCVFLDDKKVYCQRHR. Residues 2018–2074 enclose the FYR N-terminal domain; sequence NIHMMIGSMTIDCLGILNDLSDCEDKLFPIGYQCSRVYWSTTDARKRCVYTCKIVEC. 7 disordered regions span residues 2081–2133, 2145–2232, 2275–2333, 2373–2460, 2475–2618, 2647–2675, and 2713–2821; these read PDIN…TSGS, IRTP…TTGT, NKNS…KLAP, RGQR…EGNL, GQRP…RYPR, FYSSSTGKKRGKRSAEGQVDGADDLSTSD, and KISQ…KNLL. The segment covering 2095–2115 has biased composition (polar residues); that stretch reads IAHSPTSFTESSSKESQNTAE. S2098 bears the Phosphoserine mark. At T2147 the chain carries Phosphothreonine. S2151 and S2201 each carry phosphoserine. The segment covering 2214–2232 has biased composition (polar residues); the sequence is RTGNTYSRNNVSSVSTTGT. Over residues 2283–2302 the composition is skewed to low complexity; sequence SSSSEMKQSSASDLVSKSSS. Composition is skewed to polar residues over residues 2310–2319 and 2406–2421; these read VLSSKSSEGS and GMSNRSSIINEHMGSS. A compositionally biased stretch (basic and acidic residues) spans 2432 to 2442; it reads SCKETFKEKHS. Residue T2525 is modified to Phosphothreonine. K2528 participates in a covalent cross-link: Glycyl lysine isopeptide (Lys-Gly) (interchain with G-Cter in SUMO2). Composition is skewed to polar residues over residues 2543-2563 and 2573-2592; these read SPASPLQIESTSPTEPISASE and PSPNNTSCQDSQSNNYQNLP. S2611 is subject to Phosphoserine. The span at 2726-2741 shows a compositional bias: polar residues; it reads SDTSVTATTRKSSQIP. Positions 2744–2782 are enriched in basic and acidic residues; that stretch reads NGKENGTENLKIDRPEDAGEKEHVTKSSVGHKNEPKMDN. A compositionally biased stretch (polar residues) spans 2784–2795; the sequence is HSVSRVKTQGQD. The residue at position 2796 (S2796) is a Phosphoserine. The span at 2796–2805 shows a compositional bias: low complexity; the sequence is SLEAQLSSLE. Residues 2812–2821 show a composition bias toward polar residues; the sequence is TSTPSDKNLL. Residues 2847–2855 carry the 9aaTAD motif; that stretch reads SDIMDFVLK. At S2955 the chain carries Phosphoserine. At K2958 the chain carries N6-acetyllysine. Disordered stretches follow at residues 2961 to 3064 and 3166 to 3244; these read TITE…NAAV and PAAT…SNIA. Polar residues-rich tracts occupy residues 2963–2972 and 3016–3030; these read TEKSVASSES and HGNNQDLTRNSSTPG. S3036 carries the post-translational modification Phosphoserine. The span at 3039 to 3064 shows a compositional bias: polar residues; it reads VPIQNQKYVPNSTDSPGPSQISNAAV. The span at 3171-3182 shows a compositional bias: low complexity; it reads SSFPPNISNPPS. Residues 3198–3216 show a composition bias toward polar residues; that stretch reads VSESSQRTDLSTTVATPSS. Basic residues predominate over residues 3218–3233; the sequence is LKKRPISRLQTRKNKK. A Phosphothreonine modification is found at T3372. N6-acetyllysine is present on K3462. Disordered regions lie at residues 3464-3608 and 3620-3643; these read GIHS…GQPA and TQNPANEQESAEPKTVEEEESNFS. A compositionally biased stretch (polar residues) spans 3476 to 3489; sequence SGPQVSNFTQTVDA. The span at 3508-3529 shows a compositional bias: low complexity; it reads SPTSPGGSPSSPSSGQRSASPS. S3511, S3515, and S3527 each carry phosphoserine. Residues 3591–3603 show a composition bias toward polar residues; that stretch reads QDTASVEQSSQKE. In terms of domain architecture, FYR C-terminal spans 3666 to 3747; that stretch reads KKGLVFEISS…KHCRNYKFRF (82 aa). The short motif at 3762-3767 is the WDR5 interaction motif (WIN) element; sequence GSARAE. The disordered stretch occupies residues 3785-3808; that stretch reads HRQPPEYNPNDEEEEEVQLKSARR. Residues 3829-3945 enclose the SET domain; the sequence is EAVGVYRSPI…RGEELTYDYK (117 aa). S-adenosyl-L-methionine-binding residues include H3839 and R3841. At C3882 the chain carries S-methylcysteine; by autocatalysis. S-adenosyl-L-methionine contacts are provided by residues Y3883 and 3906–3907; that span reads NH. Positions 3909 and 3957 each coordinate Zn(2+). In terms of domain architecture, Post-SET spans 3953 to 3969; sequence NKLPCNCGAKKCRKFLN. N3958 provides a ligand contact to S-adenosyl-L-methionine. Residues C3959 and C3964 each contribute to the Zn(2+) site.

It belongs to the class V-like SAM-binding methyltransferase superfamily. Histone-lysine methyltransferase family. TRX/MLL subfamily. MLL cleavage product N320 heterodimerizes with MLL cleavage product C180 (via SET and FYRC domains). Component of some MLL1/MLL complex, at least composed of the core components KMT2A/MLL1, ASH2L, HCFC1/HCF1, HCFC2, WDR5, DPY30 and RBBP5, as well as the facultative components BACC1, CHD8, E2F6, HSP70, INO80C, KANSL1, LAS1L, MAX, MCRS1, MEN1, MGA, KAT8/MOF, PELP1, PHF20, PRP31, RING2, RUVB1/TIP49A, RUVB2/TIP49B, SENP3, TAF1, TAF4, TAF6, TAF7, TAF9 and TEX10. Forms a core complex with the evolutionary conserved subcomplex WRAD composed of WDR5, RBBP5, ASH2L/ASH2 and DPY30 subunits; WRAD differentially stimulates the methyltransferase activity. Interacts (via WIN motif) with WDR5; the interaction is direct. Interaction with WDR5 is required for stable interaction with ASH2L and RBBP5, and thereby also for optimal histone methyltransferase activity. Interacts with KAT8/MOF; the interaction is direct. Interacts with SBF1 and PPP1R15A. Interacts with ZNF335. Interacts with CLOCK and BMAL1 in a circadian manner. Interacts with PPIE; this results in decreased histone H3 methyltransferase activity. Interacts with CREBBP. Interacts with the WRAD complex composed of WDR5, RBBP5, ASH2L and DPY30. Interacts (via MBM motif) with MEN1. Interacts (via IBM motifs) with PSIP1 (via IBD domain) with moderate affinity whereas the KMT2A-MEN1 complex interacts with a greater affinity; MEN1 enhances interaction of KMT2A with PSIP1. Phosphorylation increases its affinity for PSIP1. Forms a complex with CREBBP and CREB1. As to quaternary structure, (Microbial infection) Interacts with herpes virus 8/HHV-8 protein LANA1; this interaction regulates the MLL1 histone methyltransferase activity on viral DNA. In terms of processing, proteolytic cleavage by TASP1 generates MLL cleavage product N320 and MLL cleavage product C180, which reassemble through a non-covalent association. 2 cleavage sites exist, cleavage site 1 (CS1) and cleavage site 2 (CS2), to generate MLL cleavage products N320 and C180. CS2 is the major site. Phosphorylation increases its interaction with PSIP1. Post-translationally, auto-methylated at Cys-3882: auto-methylation is inhibited by the WRAD complex and unmodified histone H3. As to expression, heart, lung, brain and T- and B-lymphocytes.

The protein resides in the nucleus. It catalyses the reaction L-lysyl(4)-[histone H3] + S-adenosyl-L-methionine = N(6)-methyl-L-lysyl(4)-[histone H3] + S-adenosyl-L-homocysteine + H(+). It carries out the reaction N(6)-methyl-L-lysyl(4)-[histone H3] + S-adenosyl-L-methionine = N(6),N(6)-dimethyl-L-lysyl(4)-[histone H3] + S-adenosyl-L-homocysteine + H(+). The enzyme catalyses L-cysteinyl-[protein] + S-adenosyl-L-methionine = S-methyl-L-cysteinyl-[protein] + S-adenosyl-L-homocysteine + H(+). In terms of biological role, histone methyltransferase that plays an essential role in early development and hematopoiesis. Catalytic subunit of the MLL1/MLL complex, a multiprotein complex that mediates both methylation of 'Lys-4' of histone H3 (H3K4me) complex and acetylation of 'Lys-16' of histone H4 (H4K16ac). Catalyzes methyl group transfer from S-adenosyl-L-methionine to the epsilon-amino group of 'Lys-4' of histone H3 (H3K4) via a non-processive mechanism. Part of chromatin remodeling machinery predominantly forms H3K4me1 and H3K4me2 methylation marks at active chromatin sites where transcription and DNA repair take place. Has weak methyltransferase activity by itself, and requires other component of the MLL1/MLL complex to obtain full methyltransferase activity. Has no activity toward histone H3 phosphorylated on 'Thr-3', less activity toward H3 dimethylated on 'Arg-8' or 'Lys-9', while it has higher activity toward H3 acetylated on 'Lys-9'. Binds to unmethylated CpG elements in the promoter of target genes and helps maintain them in the nonmethylated state. Required for transcriptional activation of HOXA9. Promotes PPP1R15A-induced apoptosis. Plays a critical role in the control of circadian gene expression and is essential for the transcriptional activation mediated by the CLOCK-BMAL1 heterodimer. Establishes a permissive chromatin state for circadian transcription by mediating a rhythmic methylation of 'Lys-4' of histone H3 (H3K4me) and this histone modification directs the circadian acetylation at H3K9 and H3K14 allowing the recruitment of CLOCK-BMAL1 to chromatin. Also has auto-methylation activity on Cys-3882 in absence of histone H3 substrate. This Homo sapiens (Human) protein is Histone-lysine N-methyltransferase 2A (KMT2A).